The primary structure comprises 284 residues: 2-dehydro-3-deoxyphosphooctonate aldolase (284 aa).

The protein belongs to the KdsA family.

The protein localises to the cytoplasm. The enzyme catalyses D-arabinose 5-phosphate + phosphoenolpyruvate + H2O = 3-deoxy-alpha-D-manno-2-octulosonate-8-phosphate + phosphate. It participates in carbohydrate biosynthesis; 3-deoxy-D-manno-octulosonate biosynthesis; 3-deoxy-D-manno-octulosonate from D-ribulose 5-phosphate: step 2/3. It functions in the pathway bacterial outer membrane biogenesis; lipopolysaccharide biosynthesis. The chain is 2-dehydro-3-deoxyphosphooctonate aldolase from Vibrio vulnificus (strain CMCP6).